We begin with the raw amino-acid sequence, 147 residues long: Receptor activity-modifying protein 3 (147 aa).

The N-terminal stretch at 1 to 22 is a signal peptide; that stretch reads MATPAQRLHLLPLLLLLCGECA. At 23 to 112 the chain is on the extracellular side; it reads QVCGCNETGM…CTVDRTHWED (90 aa). 4 N-linked (GlcNAc...) asparagine glycosylation sites follow: N28, N57, N70, and N102. Cystine bridges form between C39–C71 and C56–C103. A helical membrane pass occupies residues 113-137; sequence PPDEVLIPLIAVPVLLTVAMAGLVV. At 138 to 147 the chain is on the cytoplasmic side; the sequence is WRSKRTDRLL.

It belongs to the RAMP family. In terms of assembly, heterodimer of CALCRL and RAMP3; interaction induces allosteric modulation of CALCRL function and ligand specificity for adrenomedullin/ADM and intermedin/ADM2. Heterodimer of CALCR and RAMP3; interaction form the receptor complex AMYR3 for amylin/IAPP. Interacts with GPER1.

The protein resides in the cell membrane. It localises to the membrane. Its function is as follows. Accessory protein that interacts with and modulates the function of G-protein coupled receptors including calcitonin gene-related peptide type 1 receptor (CALCRL), calcitonin receptor (CALCR) and G-protein coupled estrogen receptor 1 (GPER1). Required for the transport of CALCRL and GPER1 receptors to the plasma membrane. Plays a role in cardioprotection by reducing cardiac hypertrophy and perivascular fibrosis in a GPER1-dependent manner. Together with CALCRL, form a receptor complex for adrenomedullin/ADM and intermedin/ADM2. Together with CALCR, act as a receptor complex for amylin/IAPP. The sequence is that of Receptor activity-modifying protein 3 from Rattus norvegicus (Rat).